The primary structure comprises 255 residues: Imidazole glycerol phosphate synthase subunit HisF (255 aa).

Residues aspartate 12 and aspartate 131 contribute to the active site.

The protein belongs to the HisA/HisF family. Heterodimer of HisH and HisF.

It localises to the cytoplasm. It catalyses the reaction 5-[(5-phospho-1-deoxy-D-ribulos-1-ylimino)methylamino]-1-(5-phospho-beta-D-ribosyl)imidazole-4-carboxamide + L-glutamine = D-erythro-1-(imidazol-4-yl)glycerol 3-phosphate + 5-amino-1-(5-phospho-beta-D-ribosyl)imidazole-4-carboxamide + L-glutamate + H(+). It participates in amino-acid biosynthesis; L-histidine biosynthesis; L-histidine from 5-phospho-alpha-D-ribose 1-diphosphate: step 5/9. Its function is as follows. IGPS catalyzes the conversion of PRFAR and glutamine to IGP, AICAR and glutamate. The HisF subunit catalyzes the cyclization activity that produces IGP and AICAR from PRFAR using the ammonia provided by the HisH subunit. This Sphingopyxis alaskensis (strain DSM 13593 / LMG 18877 / RB2256) (Sphingomonas alaskensis) protein is Imidazole glycerol phosphate synthase subunit HisF.